Consider the following 396-residue polypeptide: Methylthioribose kinase (396 aa).

Residues Asn-44, Lys-61, and 115-117 each bind ATP; that span reads EDL. A substrate-binding site is contributed by Asp-233. 250 to 252 contributes to the ATP binding site; the sequence is DPE. A substrate-binding site is contributed by Arg-340.

It belongs to the methylthioribose kinase family. As to quaternary structure, homodimer.

The enzyme catalyses 5-(methylsulfanyl)-D-ribose + ATP = 5-(methylsulfanyl)-alpha-D-ribose 1-phosphate + ADP + H(+). Its pathway is amino-acid biosynthesis; L-methionine biosynthesis via salvage pathway; S-methyl-5-thio-alpha-D-ribose 1-phosphate from S-methyl-5'-thioadenosine (hydrolase route): step 2/2. Functionally, catalyzes the phosphorylation of methylthioribose into methylthioribose-1-phosphate. The chain is Methylthioribose kinase from Geobacillus kaustophilus (strain HTA426).